A 179-amino-acid chain; its full sequence is Large ribosomal subunit protein uL5 (179 aa).

Belongs to the universal ribosomal protein uL5 family. Part of the 50S ribosomal subunit; part of the 5S rRNA/L5/L18/L25 subcomplex. Contacts the 5S rRNA and the P site tRNA. Forms a bridge to the 30S subunit in the 70S ribosome.

Its function is as follows. This is one of the proteins that bind and probably mediate the attachment of the 5S RNA into the large ribosomal subunit, where it forms part of the central protuberance. In the 70S ribosome it contacts protein S13 of the 30S subunit (bridge B1b), connecting the 2 subunits; this bridge is implicated in subunit movement. Contacts the P site tRNA; the 5S rRNA and some of its associated proteins might help stabilize positioning of ribosome-bound tRNAs. The polypeptide is Large ribosomal subunit protein uL5 (Rickettsia akari (strain Hartford)).